A 339-amino-acid polypeptide reads, in one-letter code: Homeobox protein Hox-D13 (339 aa).

The disordered stretch occupies residues 1 to 33 (MSRSGTWDMDGLRADGGAAGAAPASSSSSVAAP). Over residues 20–33 (GAAPASSSSSVAAP) the composition is skewed to low complexity. The segment at residues 272-331 (GRKKRVPYTKLQLKELENEYAINKFINKDKRRRISAATNLSERQVTIWFQNRRVKDKKIV) is a DNA-binding region (homeobox).

Belongs to the Abd-B homeobox family.

Its subcellular location is the nucleus. In terms of biological role, sequence-specific transcription factor that binds gene promoters and activates their transcription. Part of a developmental regulatory system that provides cells with specific positional identities on the anterior-posterior axis. The polypeptide is Homeobox protein Hox-D13 (Hoxd13) (Mus musculus (Mouse)).